The following is a 558-amino-acid chain: Arginine--tRNA ligase (558 aa).

Residues 129-139 carry the 'HIGH' region motif; the sequence is ANPTGPLHVGH.

This sequence belongs to the class-I aminoacyl-tRNA synthetase family. As to quaternary structure, monomer.

Its subcellular location is the cytoplasm. It catalyses the reaction tRNA(Arg) + L-arginine + ATP = L-arginyl-tRNA(Arg) + AMP + diphosphate. The chain is Arginine--tRNA ligase from Polaromonas naphthalenivorans (strain CJ2).